The following is a 35-amino-acid chain: Photosystem II reaction center protein Y (35 aa).

Residues 1 to 4 (MDTR) are Lumenal-facing. Residues 5–23 (LLIVLLPIIAAASWAIYNI) form a helical membrane-spanning segment. The Stromal segment spans residues 24-35 (GKILLLQLTKRS).

This sequence belongs to the PsbY family. In terms of assembly, PSII is composed of 1 copy each of membrane proteins PsbA, PsbB, PsbC, PsbD, PsbE, PsbF, PsbH, PsbI, PsbJ, PsbK, PsbL, PsbM, PsbT, PsbX, PsbY, PsbZ, Psb30/Ycf12, at least 3 peripheral proteins of the oxygen-evolving complex and a large number of cofactors. It forms dimeric complexes.

The protein resides in the plastid. The protein localises to the chloroplast thylakoid membrane. Functionally, loosely associated component of the core of photosystem II (PSII), it is not always seen in crystals. PSII is a light-driven water plastoquinone oxidoreductase, using light energy to abstract electrons from H(2)O, generating a proton gradient subsequently used for ATP formation. This chain is Photosystem II reaction center protein Y, found in Cyanidioschyzon merolae (strain NIES-3377 / 10D) (Unicellular red alga).